A 643-amino-acid chain; its full sequence is MSRPSTPLLDKAPTPDRLRALPEQDLPQLAEELRTELIDAVSTTGGHLGAGLGVVELTVALHHVFNTPYDRIIWDVGHQAYPHKILTGRRDRIRTLRQAGGLSGFTKRAESEYDPFGAAHSSTSISAGLGMAVASELSGEKRNVIAVIGDGSMSAGMAYEAMNNAGALDARLIVILNDNDMSIAPPTGAMSAYLARLVSGRTYRSVREAAKQVAQKLPKFLQDKARKSEEYARAFFTGGTLFEELGFYYVGPIDGHNLDHLLPVLKNVRDTQKGPVLIHVVTQKGKGYAPAEAAADKYHGVNKFDVITGKQAKPPANAPSYTKIFGTSLIEEARHDDKIVAVTAAMPTGTGLDLFGEAFPKRVFDVGIAEQHAVTFAAGLASEGYKPFCAIYSTFLQRGYDQVVHDVSIQNLPVRFPIDRAGLVGADGPTHAGSFDTGFLAALPGFVVMAASDEAELRHMVRTAAEYDEGPISFRYPRGDGVGVDLPERGSVLEIGKGRIVREGTKVALLSFGTRLQECLAAAEELGAAGLSTTVADARFAKPLDHDLIRRLAREHEVLVMVEEGAVGGFGSHVLQFLATDGLLDRGFKVRALTLPDIYQDHGKPDAMYAEAGLDRTGIVRTVFAALHRDELGHEALPTPFRA.

Residues His-78 and 119 to 121 (AHS) contribute to the thiamine diphosphate site. Asp-150 contributes to the Mg(2+) binding site. Thiamine diphosphate is bound by residues 151–152 (GS), Asn-179, Tyr-288, and Glu-370. A Mg(2+)-binding site is contributed by Asn-179.

The protein belongs to the transketolase family. DXPS subfamily. Homodimer. Mg(2+) serves as cofactor. It depends on thiamine diphosphate as a cofactor.

The catalysed reaction is D-glyceraldehyde 3-phosphate + pyruvate + H(+) = 1-deoxy-D-xylulose 5-phosphate + CO2. It participates in metabolic intermediate biosynthesis; 1-deoxy-D-xylulose 5-phosphate biosynthesis; 1-deoxy-D-xylulose 5-phosphate from D-glyceraldehyde 3-phosphate and pyruvate: step 1/1. Functionally, catalyzes the acyloin condensation reaction between C atoms 2 and 3 of pyruvate and glyceraldehyde 3-phosphate to yield 1-deoxy-D-xylulose-5-phosphate (DXP). This Brucella melitensis biotype 2 (strain ATCC 23457) protein is 1-deoxy-D-xylulose-5-phosphate synthase.